Consider the following 568-residue polypeptide: Putative F-box protein At5g39480 (568 aa).

Residues Ala-9–Gln-55 form the F-box domain. The tract at residues Thr-315–Ser-337 is disordered. Positions Ser-321–Ser-332 are enriched in low complexity.

This Arabidopsis thaliana (Mouse-ear cress) protein is Putative F-box protein At5g39480.